A 273-amino-acid polypeptide reads, in one-letter code: 2-dehydro-3-deoxyphosphooctonate aldolase (273 aa).

The protein belongs to the KdsA family.

The protein localises to the cytoplasm. It carries out the reaction D-arabinose 5-phosphate + phosphoenolpyruvate + H2O = 3-deoxy-alpha-D-manno-2-octulosonate-8-phosphate + phosphate. It functions in the pathway carbohydrate biosynthesis; 3-deoxy-D-manno-octulosonate biosynthesis; 3-deoxy-D-manno-octulosonate from D-ribulose 5-phosphate: step 2/3. Its pathway is bacterial outer membrane biogenesis; lipopolysaccharide biosynthesis. The protein is 2-dehydro-3-deoxyphosphooctonate aldolase of Nitratidesulfovibrio vulgaris (strain ATCC 29579 / DSM 644 / CCUG 34227 / NCIMB 8303 / VKM B-1760 / Hildenborough) (Desulfovibrio vulgaris).